A 130-amino-acid chain; its full sequence is Small ribosomal subunit protein uS9 (130 aa).

It belongs to the universal ribosomal protein uS9 family.

The sequence is that of Small ribosomal subunit protein uS9 from Vibrio atlanticus (strain LGP32) (Vibrio splendidus (strain Mel32)).